The following is a 377-amino-acid chain: MRLSVRRVLLAAGCALVLVLAVQLGQQVLECRAVLAGLRSPRGAMRPEQEELVMVGTNHVEYRYGKAMPLIFVGGVPRSGTTLMRAMLDAHPEVRCGEETRIIPRVLAMRQAWSKSGREKLRLDEAGVTDEVLDAAMQAFILEVIAKHGEPARVLCNKDPFTLKSSVYLSRLFPNSKFLLMVRDGRASVHSMITRKVTIAGFDLSSYRDCLTKWNKAIEVMYAQCMEVGKEKCLPVYYEQLVLHPRRSLKLILDFLGIAWSDAVLHHEDLIGKPGGVSLSKIERSTDQVIKPVNLEALSKWTGHIPGDVVRDMAQIAPMLAQLGYDPYANPPNYGNPDPFVINNTQRVLKGDYKTPANLKGYFQVNQNSTSSHLGSS.

The Cytoplasmic portion of the chain corresponds to 1-8 (MRLSVRRV). Residues 9–25 (LLAAGCALVLVLAVQLG) traverse the membrane as a helical; Signal-anchor for type II membrane protein segment. Residues 26–377 (QQVLECRAVL…NSTSSHLGSS (352 aa)) are Lumenal-facing. 78 to 82 (RSGTT) serves as a coordination point for 3'-phosphoadenylyl sulfate. A disulfide bridge links Cys-96 with Cys-156. Glu-99 serves as the catalytic Proton donor/acceptor. The interaction with peptide substrate stretch occupies residues 101–105 (RIIPR). Residues Arg-183, Ser-191, and Arg-195 each coordinate 3'-phosphoadenylyl sulfate. The cysteines at positions 225 and 233 are disulfide-linked. 3'-phosphoadenylyl sulfate-binding positions include Tyr-238, 285-294 (STDQVIKPVN), and Lys-300. N-linked (GlcNAc...) asparagine glycosylation is found at Asn-343 and Asn-368.

This sequence belongs to the protein sulfotransferase family. Homodimer. Can also form heterodimers with TPST1. Post-translationally, N-glycosylated. Widely expressed.

The protein resides in the golgi apparatus membrane. It carries out the reaction L-tyrosyl-[protein] + 3'-phosphoadenylyl sulfate = O-sulfo-L-tyrosine-[protein] + adenosine 3',5'-bisphosphate + H(+). In terms of biological role, catalyzes the O-sulfation of tyrosine residues within acidic motifs of polypeptides, using 3'-phosphoadenylyl sulfate (PAPS) as cosubstrate. This chain is Protein-tyrosine sulfotransferase 2 (TPST2), found in Homo sapiens (Human).